A 145-amino-acid polypeptide reads, in one-letter code: Bacilliredoxin SERP1006 (145 aa).

This sequence belongs to the bacilliredoxin family.

The polypeptide is Bacilliredoxin SERP1006 (Staphylococcus epidermidis (strain ATCC 35984 / DSM 28319 / BCRC 17069 / CCUG 31568 / BM 3577 / RP62A)).